Consider the following 82-residue polypeptide: Defensin-like protein 208 (82 aa).

The first 29 residues, 1 to 29, serve as a signal peptide directing secretion; that stretch reads MAKNLNTVSFTVLLLVLLMASTGILETEA. Intrachain disulfides connect C38/C63, C50/C76, and C54/C78.

The protein belongs to the DEFL family.

It is found in the secreted. The chain is Defensin-like protein 208 from Arabidopsis thaliana (Mouse-ear cress).